The sequence spans 184 residues: ATP synthase subunit b, chloroplastic (184 aa).

A helical transmembrane segment spans residues 27 to 49; sequence LATNPINLSVVFGVLIFFGKGVL.

The protein belongs to the ATPase B chain family. F-type ATPases have 2 components, F(1) - the catalytic core - and F(0) - the membrane proton channel. F(1) has five subunits: alpha(3), beta(3), gamma(1), delta(1), epsilon(1). F(0) has four main subunits: a(1), b(1), b'(1) and c(10-14). The alpha and beta chains form an alternating ring which encloses part of the gamma chain. F(1) is attached to F(0) by a central stalk formed by the gamma and epsilon chains, while a peripheral stalk is formed by the delta, b and b' chains.

Its subcellular location is the plastid. It is found in the chloroplast thylakoid membrane. Functionally, f(1)F(0) ATP synthase produces ATP from ADP in the presence of a proton or sodium gradient. F-type ATPases consist of two structural domains, F(1) containing the extramembraneous catalytic core and F(0) containing the membrane proton channel, linked together by a central stalk and a peripheral stalk. During catalysis, ATP synthesis in the catalytic domain of F(1) is coupled via a rotary mechanism of the central stalk subunits to proton translocation. In terms of biological role, component of the F(0) channel, it forms part of the peripheral stalk, linking F(1) to F(0). In Crucihimalaya wallichii (Rock-cress), this protein is ATP synthase subunit b, chloroplastic.